Consider the following 194-residue polypeptide: Ras-related protein RabU (194 aa).

19-27 contributes to the GTP binding site; sequence GYDYECGIK. The short motif at 42–50 is the Effector region element; sequence PESQVGVDF. GTP-binding positions include 68 to 72 and 130 to 133; these read PQNKY and NNSE.

This sequence belongs to the small GTPase superfamily. Rab family.

The chain is Ras-related protein RabU (rabU) from Dictyostelium discoideum (Social amoeba).